The sequence spans 273 residues: MLSGAYLRVLNERPGQAVLWSLGCQRGSASSTEGNRCVEAAEACTADEQCQQLRSEYVAQCLGRAGWRGPGSCVRSRCRRALRRFFARGPPALTHALLFCGCEGPACAERRRQTFAPACAFSGPQLAPPSCLKPLDRCERSRRCRPRLFAFQASCAPAPGSRDGCPEEGGPRCLRAYAGLVGTVVTPNYLDNVSARVAPWCGCEASGNRREECEAFRKLFTRNPCLDGAIQAFDSSQPSVLQDQWNPYQNAGCCFLWVSSMSILTALALQALL.

An N-linked (GlcNAc...) asparagine glycan is attached at Asn192. A lipid anchor (GPI-anchor amidated asparagine) is attached at Asn250. A propeptide spans 251-273 (AGCCFLWVSSMSILTALALQALL) (removed in mature form).

It belongs to the GDNFR family. Interacts with ARTN ligand and RET: forms a 2:2:2 ternary complex composed of ARTN ligand, GFRA3 and RET receptor. Interacts with SORL1. Weakly expressed in heart, brain and testis.

It localises to the cell membrane. It is found in the secreted. Its function is as follows. Receptor for persephin (PSPN), a growth factor that exhibits neurotrophic activity on mesencephalic dopaminergic and motor neurons. Acts by binding to its coreceptor, GFRA4, leading to autophosphorylation and activation of the RET receptor. May be important in C-cell development and, in the postnatal development of the adrenal medulla. The chain is GDNF family receptor alpha-4 (Gfra4) from Rattus norvegicus (Rat).